We begin with the raw amino-acid sequence, 338 residues long: Ketol-acid reductoisomerase (NADP(+)) (338 aa).

The KARI N-terminal Rossmann domain occupies 1–181; it reads MKVYYDKDAD…GGTRGGVIET (181 aa). NADP(+)-binding positions include 24 to 27, Arg47, and Ser52; that span reads YGSQ. The active site involves His107. An NADP(+)-binding site is contributed by Gly133. A KARI C-terminal knotted domain is found at 182–327; that stretch reads TFKEETETDL…AKLRDMMPWI (146 aa). Asp190, Glu194, Glu226, and Glu230 together coordinate Mg(2+). Ser251 contributes to the substrate binding site.

This sequence belongs to the ketol-acid reductoisomerase family. It depends on Mg(2+) as a cofactor.

The enzyme catalyses (2R)-2,3-dihydroxy-3-methylbutanoate + NADP(+) = (2S)-2-acetolactate + NADPH + H(+). The catalysed reaction is (2R,3R)-2,3-dihydroxy-3-methylpentanoate + NADP(+) = (S)-2-ethyl-2-hydroxy-3-oxobutanoate + NADPH + H(+). It participates in amino-acid biosynthesis; L-isoleucine biosynthesis; L-isoleucine from 2-oxobutanoate: step 2/4. The protein operates within amino-acid biosynthesis; L-valine biosynthesis; L-valine from pyruvate: step 2/4. Involved in the biosynthesis of branched-chain amino acids (BCAA). Catalyzes an alkyl-migration followed by a ketol-acid reduction of (S)-2-acetolactate (S2AL) to yield (R)-2,3-dihydroxy-isovalerate. In the isomerase reaction, S2AL is rearranged via a Mg-dependent methyl migration to produce 3-hydroxy-3-methyl-2-ketobutyrate (HMKB). In the reductase reaction, this 2-ketoacid undergoes a metal-dependent reduction by NADPH to yield (R)-2,3-dihydroxy-isovalerate. The chain is Ketol-acid reductoisomerase (NADP(+)) from Nitrosomonas europaea (strain ATCC 19718 / CIP 103999 / KCTC 2705 / NBRC 14298).